A 348-amino-acid polypeptide reads, in one-letter code: Anthranilate phosphoribosyltransferase (348 aa).

5-phospho-alpha-D-ribose 1-diphosphate contacts are provided by residues Gly89, 92–93 (GD), Thr97, 99–102 (NIST), 117–125 (KHGNRSVSS), and Ser129. Gly89 contributes to the anthranilate binding site. Residue Ser101 coordinates Mg(2+). Residue Asn120 coordinates anthranilate. Arg175 is an anthranilate binding site. Residues Asp233 and Glu234 each contribute to the Mg(2+) site.

Belongs to the anthranilate phosphoribosyltransferase family. Homodimer. Requires Mg(2+) as cofactor.

It carries out the reaction N-(5-phospho-beta-D-ribosyl)anthranilate + diphosphate = 5-phospho-alpha-D-ribose 1-diphosphate + anthranilate. It participates in amino-acid biosynthesis; L-tryptophan biosynthesis; L-tryptophan from chorismate: step 2/5. Catalyzes the transfer of the phosphoribosyl group of 5-phosphorylribose-1-pyrophosphate (PRPP) to anthranilate to yield N-(5'-phosphoribosyl)-anthranilate (PRA). In Shewanella sp. (strain W3-18-1), this protein is Anthranilate phosphoribosyltransferase.